The following is a 289-amino-acid chain: 5'-adenylylsulfate reductase-like 7 (289 aa).

The first 23 residues, 1 to 23 (MNLWVSIFLVSAIAGSCLPSGFA), serve as a signal peptide directing secretion. The region spanning 37–157 (SVIEQKCPRS…LIQFYKETTG (121 aa)) is the Thioredoxin domain. N-linked (GlcNAc...) asparagine glycosylation is found at asparagine 132 and asparagine 184. Residues 198–218 (MVLALMFLSLKLAILIFPIMG) traverse the membrane as a helical segment.

Its subcellular location is the membrane. The chain is 5'-adenylylsulfate reductase-like 7 (APRL7) from Arabidopsis thaliana (Mouse-ear cress).